Consider the following 265-residue polypeptide: Ubiquinone biosynthesis protein COQ4 homolog, mitochondrial (265 aa).

Residues His-162, Asp-163, His-166, and Glu-178 each contribute to the Zn(2+) site.

This sequence belongs to the COQ4 family. Component of a multi-subunit COQ enzyme complex. Requires Zn(2+) as cofactor.

The protein resides in the mitochondrion inner membrane. It catalyses the reaction a 4-hydroxy-3-methoxy-5-(all-trans-polyprenyl)benzoate + H(+) = a 2-methoxy-6-(all-trans-polyprenyl)phenol + CO2. It participates in cofactor biosynthesis; ubiquinone biosynthesis. Functionally, lyase that catalyzes the C1-decarboxylation of 4-hydroxy-3-methoxy-5-(all-trans-polyprenyl)benzoic acid into 2-methoxy-6-(all-trans-polyprenyl)phenol during ubiquinone biosynthesis. In Drosophila willistoni (Fruit fly), this protein is Ubiquinone biosynthesis protein COQ4 homolog, mitochondrial.